The following is a 159-amino-acid chain: Eukaryotic translation initiation factor 5A-4 (159 aa).

A compositionally biased stretch (basic and acidic residues) spans 1 to 12; the sequence is MSDEEHQFESKA. Residues 1 to 21 form a disordered region; sequence MSDEEHQFESKADAGASKTYP. Lysine 52 bears the Hypusine mark.

It belongs to the eIF-5A family. In terms of processing, lys-52 undergoes hypusination, a unique post-translational modification that consists in the addition of a butylamino group from spermidine to lysine side chain, leading to the formation of the unusual amino acid hypusine. eIF-5As are the only known proteins to undergo this modification, which is essential for their function.

Translation factor that promotes translation elongation and termination, particularly upon ribosome stalling at specific amino acid sequence contexts. Binds between the exit (E) and peptidyl (P) site of the ribosome and promotes rescue of stalled ribosome: specifically required for efficient translation of polyproline-containing peptides as well as other motifs that stall the ribosome. Acts as a ribosome quality control (RQC) cofactor by joining the RQC complex to facilitate peptidyl transfer during CAT tailing step. This Solanum tuberosum (Potato) protein is Eukaryotic translation initiation factor 5A-4 (EIF5A4).